A 315-amino-acid polypeptide reads, in one-letter code: Methionyl-tRNA formyltransferase (315 aa).

The tract at residues 2–189 is N-terminal domain; the sequence is SESLRIIFAG…LITTLKQLAD (188 aa). Residue 113-116 participates in (6S)-5,6,7,8-tetrahydrofolate binding; it reads SLLP. Residues 210–315 form a C-terminal domain region; it reads KEEARIDWSL…EWFVPGNRLA (106 aa).

This sequence belongs to the Fmt family.

The catalysed reaction is L-methionyl-tRNA(fMet) + (6R)-10-formyltetrahydrofolate = N-formyl-L-methionyl-tRNA(fMet) + (6S)-5,6,7,8-tetrahydrofolate + H(+). Its function is as follows. Attaches a formyl group to the free amino group of methionyl-tRNA(fMet). The formyl group appears to play a dual role in the initiator identity of N-formylmethionyl-tRNA by promoting its recognition by IF2 and preventing the misappropriation of this tRNA by the elongation apparatus. This is Methionyl-tRNA formyltransferase from Escherichia coli O6:H1 (strain CFT073 / ATCC 700928 / UPEC).